We begin with the raw amino-acid sequence, 283 residues long: Pantothenate synthetase (283 aa).

30–37 (MGNLHLGH) provides a ligand contact to ATP. His-37 acts as the Proton donor in catalysis. Gln-61 contributes to the (R)-pantoate binding site. A beta-alanine-binding site is contributed by Gln-61. An ATP-binding site is contributed by 149 to 152 (GQKD). Gln-155 is a (R)-pantoate binding site. ATP contacts are provided by residues Ile-178 and 186–189 (MSSR).

The protein belongs to the pantothenate synthetase family. In terms of assembly, homodimer.

The protein resides in the cytoplasm. The catalysed reaction is (R)-pantoate + beta-alanine + ATP = (R)-pantothenate + AMP + diphosphate + H(+). It functions in the pathway cofactor biosynthesis; (R)-pantothenate biosynthesis; (R)-pantothenate from (R)-pantoate and beta-alanine: step 1/1. In terms of biological role, catalyzes the condensation of pantoate with beta-alanine in an ATP-dependent reaction via a pantoyl-adenylate intermediate. This is Pantothenate synthetase from Shewanella pealeana (strain ATCC 700345 / ANG-SQ1).